The chain runs to 370 residues: NSFL1 cofactor p47 (370 aa).

Positions 54–73 (SQATPSSVSRGTAPSDNRVT) are disordered. Phosphoserine occurs at positions 74, 102, and 114. Disordered stretches follow at residues 80–116 (HDQDEDEEEEEGQRFYAGGSERSGQQIVGPPRKRSPN) and 137–157 (VTKSPGETSKPRPFAGGGYRL). The Nuclear localization signal motif lies at 109–115 (PPRKRSP). Phosphoserine; by CDK1 is present on Ser-140. A Phosphotyrosine modification is found at Tyr-167. Positions 172–175 (RRRH) match the Nuclear localization signal motif. A phosphoserine mark is found at Ser-176, Ser-192, and Ser-272. The SEP domain maps to 179–244 (DVHVVLKLWK…MEDHRDEDFV (66 aa)). The disordered stretch occupies residues 272–292 (SPAQQAENEAKASSSISIDES). The region spanning 291–368 (ESQPTTNIQI…NLLNAVIVQR (78 aa)) is the UBX domain.

Part of a ternary complex containing STX5A, NSFL1C and VCP. NSFL1C forms a homotrimer that binds to one end of a VCP homohexamer. The complex binds to membranes enriched in phosphatidylethanolamine-containing lipids and promotes Golgi membrane fusion. Interaction with VCIP135 leads to dissociation of the complex via ATP hydrolysis by VCP. Binds ubiquitin and mono-ubiquitinated proteins via its N-terminal UBA-like domain when bound to VCP. Phosphorylated during mitosis. Phosphorylation inhibits interaction with Golgi membranes and is required for the fragmentation of the Golgi stacks during mitosis.

It localises to the nucleus. It is found in the golgi apparatus. The protein localises to the golgi stack. The protein resides in the chromosome. Its subcellular location is the cytoplasm. It localises to the cytoskeleton. It is found in the microtubule organizing center. The protein localises to the centrosome. In terms of biological role, reduces the ATPase activity of VCP. Necessary for the fragmentation of Golgi stacks during mitosis and for VCP-mediated reassembly of Golgi stacks after mitosis. May play a role in VCP-mediated formation of transitional endoplasmic reticulum (tER). Inhibits the activity of CTSL (in vitro). Together with UBXN2B/p37, regulates the centrosomal levels of kinase AURKA/Aurora A during mitotic progression by promoting AURKA removal from centrosomes in prophase. Also, regulates spindle orientation during mitosis. The chain is NSFL1 cofactor p47 (NSFL1C) from Bos taurus (Bovine).